The following is a 156-amino-acid chain: Small ribosomal subunit protein uS7c (156 aa).

Belongs to the universal ribosomal protein uS7 family. Part of the 30S ribosomal subunit.

The protein localises to the plastid. Its subcellular location is the chloroplast. Its function is as follows. One of the primary rRNA binding proteins, it binds directly to 16S rRNA where it nucleates assembly of the head domain of the 30S subunit. The chain is Small ribosomal subunit protein uS7c (rps7) from Stangeria eriopus (Natal grass cycad).